The chain runs to 374 residues: Cell division protein C (374 aa).

The MIT domain occupies 11–73 (ARKYAINAVK…YKRRIEVLKE (63 aa)). 144 to 151 (GPPGCGKT) contributes to the ATP binding site.

The protein belongs to the AAA ATPase family. In terms of assembly, interacts with CdvB.

It is found in the cytoplasm. It localises to the nucleoid. Part of a cell division machinery. The CdvA, CdvB and CdvC proteins polymerize between segregating nucleoids and persist throughout cell division, forming a successively smaller structure during constriction. The sequence is that of Cell division protein C from Sulfolobus acidocaldarius (strain ATCC 33909 / DSM 639 / JCM 8929 / NBRC 15157 / NCIMB 11770).